The chain runs to 137 residues: L-alanyl-D-glutamate peptidase (137 aa).

Zn(2+)-binding residues include His-66, Asp-73, and His-133.

Belongs to the peptidase M15C family. The cofactor is Zn(2+).

Functionally, endolysin with L-alanyl-D-glutamate peptidase activity that degrades host peptidoglycans and participates with the holin in the sequential events which lead to the programmed host cell lysis releasing the mature viral particles. Once the holin has permeabilized the host cell membrane, the endolysin can reach the periplasm and break down the peptidoglycan layer by hydrolyzing the link between L-alanine and D-glutamate residues. This chain is L-alanyl-D-glutamate peptidase (lys), found in Escherichia coli (Enterobacteria phage T5).